The chain runs to 173 residues: Translocon-associated protein subunit delta (173 aa).

The N-terminal stretch at 1 to 23 is a signal peptide; that stretch reads MAAMASLGALALLLLSSLSRCSA. The Lumenal portion of the chain corresponds to 24-144; sequence EACLEPQITP…SVDHRGTWNG (121 aa). Residues Cys-26 and Cys-57 are joined by a disulfide bond. Residue Lys-73 forms a Glycyl lysine isopeptide (Lys-Gly) (interchain with G-Cter in ubiquitin) linkage. A helical membrane pass occupies residues 145 to 165; sequence PWVSTEVLAAAIGLVIYYLAF. Residues 166-173 lie on the Cytoplasmic side of the membrane; it reads SAKSHIQA.

The protein belongs to the TRAP-delta family. As to quaternary structure, heterotetramer of TRAP-alpha, TRAP-beta, TRAP-delta and TRAP-gamma.

It is found in the endoplasmic reticulum membrane. TRAP proteins are part of a complex whose function is to bind calcium to the ER membrane and thereby regulate the retention of ER resident proteins. The polypeptide is Translocon-associated protein subunit delta (SSR4) (Homo sapiens (Human)).